A 131-amino-acid polypeptide reads, in one-letter code: D-ribose pyranase (131 aa).

Histidine 20 acts as the Proton donor in catalysis. Substrate contacts are provided by residues aspartate 28, histidine 98, and 120-122; that span reads FSN.

The protein belongs to the RbsD / FucU family. RbsD subfamily. Homodecamer.

Its subcellular location is the cytoplasm. It carries out the reaction beta-D-ribopyranose = beta-D-ribofuranose. It functions in the pathway carbohydrate metabolism; D-ribose degradation; D-ribose 5-phosphate from beta-D-ribopyranose: step 1/2. Functionally, catalyzes the interconversion of beta-pyran and beta-furan forms of D-ribose. The sequence is that of D-ribose pyranase from Lactobacillus acidophilus (strain ATCC 700396 / NCK56 / N2 / NCFM).